The primary structure comprises 498 residues: Lysine--tRNA ligase (498 aa).

The Mg(2+) site is built by Glu407 and Glu414.

The protein belongs to the class-II aminoacyl-tRNA synthetase family. As to quaternary structure, homodimer. Mg(2+) serves as cofactor.

The protein localises to the cytoplasm. The enzyme catalyses tRNA(Lys) + L-lysine + ATP = L-lysyl-tRNA(Lys) + AMP + diphosphate. The chain is Lysine--tRNA ligase from Rhizobium johnstonii (strain DSM 114642 / LMG 32736 / 3841) (Rhizobium leguminosarum bv. viciae).